We begin with the raw amino-acid sequence, 326 residues long: Cytosolic Fe-S cluster assembly factor NBP35 (326 aa).

The segment at 1–38 (MTEIANGQQILPPDYTLKEPEPEHCPGPESENAGKGDS) is disordered. A compositionally biased stretch (basic and acidic residues) spans 16–26 (TLKEPEPEHCP). [4Fe-4S] cluster is bound by residues Cys25, Cys39, Cys42, and Cys48. Position 78-85 (78-85 (GKGGVGKS)) interacts with ATP. Residues Cys251 and Cys254 each contribute to the [4Fe-4S] cluster site.

It belongs to the Mrp/NBP35 ATP-binding proteins family. NUBP1/NBP35 subfamily. In terms of assembly, heterotetramer of 2 NBP35 and 2 CFD1 chains. Requires [4Fe-4S] cluster as cofactor.

The protein localises to the cytoplasm. Its subcellular location is the nucleus. Component of the cytosolic iron-sulfur (Fe/S) protein assembly (CIA) machinery. Required for maturation of extramitochondrial Fe-S proteins. The NBP35-CFD1 heterotetramer forms a Fe-S scaffold complex, mediating the de novo assembly of an Fe-S cluster and its transfer to target apoproteins. Required for biogenesis and export of both ribosomal subunits, which may reflect a role in assembly of the Fe/S clusters in RLI1, a protein which performs rRNA processing and ribosome export. The sequence is that of Cytosolic Fe-S cluster assembly factor NBP35 from Kluyveromyces lactis (strain ATCC 8585 / CBS 2359 / DSM 70799 / NBRC 1267 / NRRL Y-1140 / WM37) (Yeast).